The primary structure comprises 402 residues: S-adenosylmethionine synthase (402 aa).

Residue His16 coordinates ATP. Asp18 serves as a coordination point for Mg(2+). Residue Glu44 participates in K(+) binding. Glu57 and Gln103 together coordinate L-methionine. Positions Gln103–Thr113 are flexible loop. Residues Asp178–Lys180, Lys249–Phe250, Asp258, Arg264–Lys265, Ala281, and Lys285 each bind ATP. Asp258 is an L-methionine binding site. L-methionine is bound at residue Lys289.

It belongs to the AdoMet synthase family. As to quaternary structure, homotetramer; dimer of dimers. Mg(2+) is required as a cofactor. The cofactor is K(+).

The protein resides in the cytoplasm. It catalyses the reaction L-methionine + ATP + H2O = S-adenosyl-L-methionine + phosphate + diphosphate. The protein operates within amino-acid biosynthesis; S-adenosyl-L-methionine biosynthesis; S-adenosyl-L-methionine from L-methionine: step 1/1. Catalyzes the formation of S-adenosylmethionine (AdoMet) from methionine and ATP. The overall synthetic reaction is composed of two sequential steps, AdoMet formation and the subsequent tripolyphosphate hydrolysis which occurs prior to release of AdoMet from the enzyme. This chain is S-adenosylmethionine synthase, found in Mycobacterium sp. (strain JLS).